We begin with the raw amino-acid sequence, 238 residues long: Phosphoribosylaminoimidazole-succinocarboxamide synthase (238 aa).

It belongs to the SAICAR synthetase family.

It carries out the reaction 5-amino-1-(5-phospho-D-ribosyl)imidazole-4-carboxylate + L-aspartate + ATP = (2S)-2-[5-amino-1-(5-phospho-beta-D-ribosyl)imidazole-4-carboxamido]succinate + ADP + phosphate + 2 H(+). It functions in the pathway purine metabolism; IMP biosynthesis via de novo pathway; 5-amino-1-(5-phospho-D-ribosyl)imidazole-4-carboxamide from 5-amino-1-(5-phospho-D-ribosyl)imidazole-4-carboxylate: step 1/2. This is Phosphoribosylaminoimidazole-succinocarboxamide synthase from Nitrosococcus oceani (strain ATCC 19707 / BCRC 17464 / JCM 30415 / NCIMB 11848 / C-107).